The sequence spans 184 residues: Large ribosomal subunit protein uL15 (184 aa).

The disordered stretch occupies residues 1–62 (MDLSSLRPAK…QMPMYRRLPK (62 aa)). Over residues 21–35 (RGPGSGNGTTAGKGN) the composition is skewed to gly residues.

It belongs to the universal ribosomal protein uL15 family. As to quaternary structure, part of the 50S ribosomal subunit.

Functionally, binds to the 23S rRNA. This Chlorobaculum parvum (strain DSM 263 / NCIMB 8327) (Chlorobium vibrioforme subsp. thiosulfatophilum) protein is Large ribosomal subunit protein uL15.